Here is a 77-residue protein sequence, read N- to C-terminus: Acyl carrier protein (77 aa).

The 76-residue stretch at 2–77 folds into the Carrier domain; the sequence is SSIEKRVKEI…DAIDYITEHT (76 aa). Serine 37 is subject to O-(pantetheine 4'-phosphoryl)serine.

Belongs to the acyl carrier protein (ACP) family. In terms of processing, 4'-phosphopantetheine is transferred from CoA to a specific serine of apo-ACP by AcpS. This modification is essential for activity because fatty acids are bound in thioester linkage to the sulfhydryl of the prosthetic group.

The protein resides in the cytoplasm. It participates in lipid metabolism; fatty acid biosynthesis. Carrier of the growing fatty acid chain in fatty acid biosynthesis. The polypeptide is Acyl carrier protein (Geobacter sulfurreducens (strain ATCC 51573 / DSM 12127 / PCA)).